A 699-amino-acid polypeptide reads, in one-letter code: Epithelial sodium channel subunit alpha (699 aa).

The disordered stretch occupies residues 1-71 (MLDHTRAPEL…EPRQPTEEEE (71 aa)). At 1–110 (MLDHTRAPEL…CSKHNRMKTA (110 aa)) the chain is on the cytoplasmic side. A helical transmembrane segment spans residues 111 to 131 (FWAVLWLCTFGMMYWQFALLF). At 132 to 589 (EEYFSYPVSL…SQWSLWFGSS (458 aa)) the chain is on the extracellular side. Disulfide bonds link Cys-158–Cys-332, Cys-256–Cys-263, Cys-309–Cys-316, Cys-421–Cys-506, Cys-443–Cys-483, Cys-443–Cys-502, Cys-447–Cys-498, Cys-456–Cys-483, Cys-456–Cys-506, and Cys-458–Cys-472. The interval 200–270 (RRRSTRDLRG…SDCFYQTYSS (71 aa)) is gating release of inhibition by proteolysis (GRIP); protease-sensitive region that is responsible for the proteolytic activation of the channel. The disordered stretch occupies residues 211 to 244 (LPHPLQRLRTPPPPNPARSARSASSSVRDNNPQV). Residues 227-238 (ARSARSASSSVR) are compositionally biased toward low complexity. A helical membrane pass occupies residues 590–610 (VLSVVEMAELIFDLLVITLIM). Over 611-699 (LLHRFRSRYW…SSACAPAMAL (89 aa)) the chain is Cytoplasmic. The tract at residues 637 to 699 (ASSFPSRFCP…SSACAPAMAL (63 aa)) is disordered. Low complexity predominate over residues 656 to 667 (PQQGTTPPLALT). The PY motif; recruits WW domain-containing proteins and is thereby required for ubiquitination and inhibition of the channel by NEDD4 and NEDD4L motif lies at 669 to 673 (PPPAY).

This sequence belongs to the amiloride-sensitive sodium channel (TC 1.A.6) family. SCNN1A subfamily. As to quaternary structure, heterotrimer; containing an alpha/SCNN1A, a beta/SCNN1B and a gamma/SCNN1G subunit. Interacts with WWP1 (via WW domains). Interacts with WWP2 (via WW domains); inhibits the channel. Interacts with BPIFA1; the interaction is indirect via SCNN1B and inhibits the proteolytic processing of SCNN1A and SCNN1G and the activation of ENaC. Interacts with the full-length immature form of PCSK9 (pro-PCSK9). Post-translationally, ubiquitinated. Can be ubiquitinated at multiple sites and undergo monoubiquitination and polyubiquitination. Ubiquitination by NEDD4 or NEDD4L inhibits the ENaC channel through endocytosis, intracellular retention and degradation of its individual subunits. In terms of processing, ENaC is activated through the proteolytic maturation of its subunits. Furin cleaves the SCNN1A subunit, which results in a stepwise increase in the open probability of the channel due to the release of an inhibitory tract. BPIFA1, which is recruited by the SCNN1B subunit, prevents the proteolytic activation of ENaC. N-glycosylated. Expressed in kidney (at protein level). Expressed in lung (at protein level). Expressed in the epididymis (at protein level). In the caput and corpus regions of the epididymis, expressed uniformly on the luminal and basal surfaces of the ducts and in the sperm in the duct lumen. Also expressed in distal colon and, at low levels, in liver.

Its subcellular location is the apical cell membrane. It is found in the cell projection. It localises to the cilium. The protein localises to the cytoplasmic granule. The protein resides in the cytoplasm. Its subcellular location is the cytoplasmic vesicle. It is found in the secretory vesicle. It localises to the acrosome. The protein localises to the flagellum. The enzyme catalyses Na(+)(in) = Na(+)(out). Its activity is regulated as follows. Originally identified and characterized by its inhibition by the diuretic drug amiloride. Its function is as follows. This is one of the three pore-forming subunits of the heterotrimeric epithelial sodium channel (ENaC), a critical regulator of sodium balance and fluid homeostasis. ENaC operates in epithelial tissues, where it mediates the electrodiffusion of sodium ions from extracellular fluid through the apical membrane of cells, with water following osmotically. It plays a key role in maintaining sodium homeostasis through electrogenic sodium reabsorption in the kidneys. Additionally, ENaC is essential for airway surface liquid homeostasis, which is crucial for proper mucus clearance. This Mus musculus (Mouse) protein is Epithelial sodium channel subunit alpha.